The chain runs to 460 residues: Argininosuccinate lyase (460 aa).

Belongs to the lyase 1 family. Argininosuccinate lyase subfamily.

It localises to the cytoplasm. It catalyses the reaction 2-(N(omega)-L-arginino)succinate = fumarate + L-arginine. It participates in amino-acid biosynthesis; L-arginine biosynthesis; L-arginine from L-ornithine and carbamoyl phosphate: step 3/3. This is Argininosuccinate lyase from Streptococcus sanguinis (strain SK36).